The sequence spans 66 residues: Large ribosomal subunit protein bL35 (66 aa).

This sequence belongs to the bacterial ribosomal protein bL35 family.

The chain is Large ribosomal subunit protein bL35 from Synechococcus sp. (strain RCC307).